Here is a 324-residue protein sequence, read N- to C-terminus: Cytochrome f (324 aa).

The signal sequence occupies residues 1–30; that stretch reads MNMRFSPKALVRQLGRLSLVACLSLGLLGA. Residues Tyr42, Cys62, Cys65, and His66 each coordinate heme. Residues 290–310 traverse the membrane as a helical segment; that stretch reads VLGVIAFFFAVMLAQIMLVLK.

It belongs to the cytochrome f family. As to quaternary structure, the 4 large subunits of the cytochrome b6-f complex are cytochrome b6, subunit IV (17 kDa polypeptide, PetD), cytochrome f and the Rieske protein, while the 4 small subunits are PetG, PetL, PetM and PetN. The complex functions as a dimer. It depends on heme as a cofactor.

It localises to the cellular thylakoid membrane. Its function is as follows. Component of the cytochrome b6-f complex, which mediates electron transfer between photosystem II (PSII) and photosystem I (PSI), cyclic electron flow around PSI, and state transitions. This chain is Cytochrome f, found in Synechococcus elongatus (strain ATCC 33912 / PCC 7942 / FACHB-805) (Anacystis nidulans R2).